We begin with the raw amino-acid sequence, 215 residues long: Nucleoside triphosphate pyrophosphatase (215 aa).

Belongs to the Maf family. It depends on a divalent metal cation as a cofactor.

The protein resides in the cytoplasm. The enzyme catalyses a ribonucleoside 5'-triphosphate + H2O = a ribonucleoside 5'-phosphate + diphosphate + H(+). The catalysed reaction is a 2'-deoxyribonucleoside 5'-triphosphate + H2O = a 2'-deoxyribonucleoside 5'-phosphate + diphosphate + H(+). Its function is as follows. Nucleoside triphosphate pyrophosphatase. May have a dual role in cell division arrest and in preventing the incorporation of modified nucleotides into cellular nucleic acids. The chain is Nucleoside triphosphate pyrophosphatase from Rickettsia conorii (strain ATCC VR-613 / Malish 7).